Reading from the N-terminus, the 231-residue chain is 5'-methylthioadenosine/S-adenosylhomocysteine nucleosidase (231 aa).

Catalysis depends on glutamate 12, which acts as the Proton acceptor. Residues glycine 78, valine 153, and 174 to 175 (ME) each bind substrate. Aspartate 198 functions as the Proton donor in the catalytic mechanism.

Belongs to the PNP/UDP phosphorylase family. MtnN subfamily.

It catalyses the reaction S-adenosyl-L-homocysteine + H2O = S-(5-deoxy-D-ribos-5-yl)-L-homocysteine + adenine. The catalysed reaction is S-methyl-5'-thioadenosine + H2O = 5-(methylsulfanyl)-D-ribose + adenine. It carries out the reaction 5'-deoxyadenosine + H2O = 5-deoxy-D-ribose + adenine. The protein operates within amino-acid biosynthesis; L-methionine biosynthesis via salvage pathway; S-methyl-5-thio-alpha-D-ribose 1-phosphate from S-methyl-5'-thioadenosine (hydrolase route): step 1/2. In terms of biological role, catalyzes the irreversible cleavage of the glycosidic bond in both 5'-methylthioadenosine (MTA) and S-adenosylhomocysteine (SAH/AdoHcy) to adenine and the corresponding thioribose, 5'-methylthioribose and S-ribosylhomocysteine, respectively. Also cleaves 5'-deoxyadenosine, a toxic by-product of radical S-adenosylmethionine (SAM) enzymes, into 5-deoxyribose and adenine. This Vibrio atlanticus (strain LGP32) (Vibrio splendidus (strain Mel32)) protein is 5'-methylthioadenosine/S-adenosylhomocysteine nucleosidase.